A 125-amino-acid chain; its full sequence is Large ribosomal subunit protein bL12 (125 aa).

The protein belongs to the bacterial ribosomal protein bL12 family. As to quaternary structure, homodimer. Part of the ribosomal stalk of the 50S ribosomal subunit. Forms a multimeric L10(L12)X complex, where L10 forms an elongated spine to which 2 to 4 L12 dimers bind in a sequential fashion. Binds GTP-bound translation factors.

Forms part of the ribosomal stalk which helps the ribosome interact with GTP-bound translation factors. Is thus essential for accurate translation. The polypeptide is Large ribosomal subunit protein bL12 (Afipia carboxidovorans (strain ATCC 49405 / DSM 1227 / KCTC 32145 / OM5) (Oligotropha carboxidovorans)).